The sequence spans 108 residues: Nucleoid-associated protein Mpe_A2533 (108 aa).

The interval 86 to 108 is disordered; that stretch reads TSEEKMGKLTAGMPLPPGMKLPF. Residues 99 to 108 are compositionally biased toward pro residues; sequence PLPPGMKLPF.

It belongs to the YbaB/EbfC family. In terms of assembly, homodimer.

Its subcellular location is the cytoplasm. The protein resides in the nucleoid. In terms of biological role, binds to DNA and alters its conformation. May be involved in regulation of gene expression, nucleoid organization and DNA protection. This Methylibium petroleiphilum (strain ATCC BAA-1232 / LMG 22953 / PM1) protein is Nucleoid-associated protein Mpe_A2533.